We begin with the raw amino-acid sequence, 240 residues long: DNA repair protein RecO (240 aa).

The protein belongs to the RecO family.

Its function is as follows. Involved in DNA repair and RecF pathway recombination. In Xanthomonas oryzae pv. oryzae (strain MAFF 311018), this protein is DNA repair protein RecO.